Here is a 199-residue protein sequence, read N- to C-terminus: ATP-dependent Clp protease proteolytic subunit (199 aa).

S99 functions as the Nucleophile in the catalytic mechanism. Residue H124 is part of the active site.

Belongs to the peptidase S14 family. In terms of assembly, fourteen ClpP subunits assemble into 2 heptameric rings which stack back to back to give a disk-like structure with a central cavity, resembling the structure of eukaryotic proteasomes.

It localises to the cytoplasm. The enzyme catalyses Hydrolysis of proteins to small peptides in the presence of ATP and magnesium. alpha-casein is the usual test substrate. In the absence of ATP, only oligopeptides shorter than five residues are hydrolyzed (such as succinyl-Leu-Tyr-|-NHMec, and Leu-Tyr-Leu-|-Tyr-Trp, in which cleavage of the -Tyr-|-Leu- and -Tyr-|-Trp bonds also occurs).. Cleaves peptides in various proteins in a process that requires ATP hydrolysis. Has a chymotrypsin-like activity. Plays a major role in the degradation of misfolded proteins. This Lactococcus lactis subsp. cremoris (strain SK11) protein is ATP-dependent Clp protease proteolytic subunit.